We begin with the raw amino-acid sequence, 428 residues long: Trigger factor (428 aa).

The PPIase FKBP-type domain maps to 163–248 (GDTAIIDFEG…INDVKVKELS (86 aa)).

It belongs to the FKBP-type PPIase family. Tig subfamily.

Its subcellular location is the cytoplasm. The enzyme catalyses [protein]-peptidylproline (omega=180) = [protein]-peptidylproline (omega=0). Functionally, involved in protein export. Acts as a chaperone by maintaining the newly synthesized protein in an open conformation. Functions as a peptidyl-prolyl cis-trans isomerase. This is Trigger factor from Clostridioides difficile (strain 630) (Peptoclostridium difficile).